Consider the following 346-residue polypeptide: UDP-3-O-acylglucosamine N-acyltransferase (346 aa).

The active-site Proton acceptor is His253.

This sequence belongs to the transferase hexapeptide repeat family. LpxD subfamily. Homotrimer.

The catalysed reaction is a UDP-3-O-[(3R)-3-hydroxyacyl]-alpha-D-glucosamine + a (3R)-hydroxyacyl-[ACP] = a UDP-2-N,3-O-bis[(3R)-3-hydroxyacyl]-alpha-D-glucosamine + holo-[ACP] + H(+). Its pathway is bacterial outer membrane biogenesis; LPS lipid A biosynthesis. Its function is as follows. Catalyzes the N-acylation of UDP-3-O-acylglucosamine using 3-hydroxyacyl-ACP as the acyl donor. Is involved in the biosynthesis of lipid A, a phosphorylated glycolipid that anchors the lipopolysaccharide to the outer membrane of the cell. The polypeptide is UDP-3-O-acylglucosamine N-acyltransferase (Rickettsia peacockii (strain Rustic)).